We begin with the raw amino-acid sequence, 568 residues long: Proline--tRNA ligase (568 aa).

It belongs to the class-II aminoacyl-tRNA synthetase family. ProS type 1 subfamily. Homodimer.

Its subcellular location is the cytoplasm. The catalysed reaction is tRNA(Pro) + L-proline + ATP = L-prolyl-tRNA(Pro) + AMP + diphosphate. Its function is as follows. Catalyzes the attachment of proline to tRNA(Pro) in a two-step reaction: proline is first activated by ATP to form Pro-AMP and then transferred to the acceptor end of tRNA(Pro). As ProRS can inadvertently accommodate and process non-cognate amino acids such as alanine and cysteine, to avoid such errors it has two additional distinct editing activities against alanine. One activity is designated as 'pretransfer' editing and involves the tRNA(Pro)-independent hydrolysis of activated Ala-AMP. The other activity is designated 'posttransfer' editing and involves deacylation of mischarged Ala-tRNA(Pro). The misacylated Cys-tRNA(Pro) is not edited by ProRS. The chain is Proline--tRNA ligase from Listeria welshimeri serovar 6b (strain ATCC 35897 / DSM 20650 / CCUG 15529 / CIP 8149 / NCTC 11857 / SLCC 5334 / V8).